The following is a 296-amino-acid chain: MERTIEKPRIRVSADNRAFLETSRLVSACGLNTVCQEAACPNISECWSSKHVTVMILGSVCTRACRFCNVTTGKPELLDPHEPEKLASAVGKLGLRHVVITSVDRDDLDDGGAEHFASCVRRIRETSPGTSIEVLTPDFLGKVGARDIIIAAAPDVFNHNVETVPRLHPKIRIKARYFNSLSLLEEVKRKDPRIFTKSGLMLGLGEERSEVLQVMDDMRVAGIDFLTIGQYLRPSKKHMEVQRYATDEEFQYYKEAAYARGFLMVASSALTRSSYHADEDFLHLKNARAGALAKLV.

[4Fe-4S] cluster is bound by residues C35, C40, C46, C61, C65, C68, and S274. The Radical SAM core domain maps to 47–263 (WSSKHVTVMI…KEAAYARGFL (217 aa)).

Belongs to the radical SAM superfamily. Lipoyl synthase family. Requires [4Fe-4S] cluster as cofactor.

Its subcellular location is the cytoplasm. The enzyme catalyses [[Fe-S] cluster scaffold protein carrying a second [4Fe-4S](2+) cluster] + N(6)-octanoyl-L-lysyl-[protein] + 2 oxidized [2Fe-2S]-[ferredoxin] + 2 S-adenosyl-L-methionine + 4 H(+) = [[Fe-S] cluster scaffold protein] + N(6)-[(R)-dihydrolipoyl]-L-lysyl-[protein] + 4 Fe(3+) + 2 hydrogen sulfide + 2 5'-deoxyadenosine + 2 L-methionine + 2 reduced [2Fe-2S]-[ferredoxin]. It participates in protein modification; protein lipoylation via endogenous pathway; protein N(6)-(lipoyl)lysine from octanoyl-[acyl-carrier-protein]: step 2/2. Catalyzes the radical-mediated insertion of two sulfur atoms into the C-6 and C-8 positions of the octanoyl moiety bound to the lipoyl domains of lipoate-dependent enzymes, thereby converting the octanoylated domains into lipoylated derivatives. This chain is Lipoyl synthase, found in Neorickettsia sennetsu (strain ATCC VR-367 / Miyayama) (Ehrlichia sennetsu).